The sequence spans 198 residues: FMN-dependent NADH:quinone oxidoreductase (198 aa).

Residues 92 to 95 (MWNL) and 136 to 139 (SRGG) each bind FMN.

It belongs to the azoreductase type 1 family. In terms of assembly, homodimer. Requires FMN as cofactor.

It catalyses the reaction 2 a quinone + NADH + H(+) = 2 a 1,4-benzosemiquinone + NAD(+). The enzyme catalyses N,N-dimethyl-1,4-phenylenediamine + anthranilate + 2 NAD(+) = 2-(4-dimethylaminophenyl)diazenylbenzoate + 2 NADH + 2 H(+). Quinone reductase that provides resistance to thiol-specific stress caused by electrophilic quinones. In terms of biological role, also exhibits azoreductase activity. Catalyzes the reductive cleavage of the azo bond in aromatic azo compounds to the corresponding amines. The chain is FMN-dependent NADH:quinone oxidoreductase from Clostridium perfringens (strain SM101 / Type A).